A 75-amino-acid chain; its full sequence is Putative UPF0377 protein YJL222W-A (75 aa).

Belongs to the UPF0377 family.

The sequence is that of Putative UPF0377 protein YJL222W-A from Saccharomyces cerevisiae (strain ATCC 204508 / S288c) (Baker's yeast).